Consider the following 233-residue polypeptide: Octanoyltransferase (233 aa).

Residues 36-211 (DTTPDEIWLV…EFTRQLGYPT (176 aa)) enclose the BPL/LPL catalytic domain. Residues 75–82 (RGGQVTYH), 142–144 (SLG), and 155–157 (GLA) contribute to the substrate site. C173 functions as the Acyl-thioester intermediate in the catalytic mechanism.

Belongs to the LipB family.

Its subcellular location is the cytoplasm. The catalysed reaction is octanoyl-[ACP] + L-lysyl-[protein] = N(6)-octanoyl-L-lysyl-[protein] + holo-[ACP] + H(+). The protein operates within protein modification; protein lipoylation via endogenous pathway; protein N(6)-(lipoyl)lysine from octanoyl-[acyl-carrier-protein]: step 1/2. Its function is as follows. Catalyzes the transfer of endogenously produced octanoic acid from octanoyl-acyl-carrier-protein onto the lipoyl domains of lipoate-dependent enzymes. Lipoyl-ACP can also act as a substrate although octanoyl-ACP is likely to be the physiological substrate. This Yersinia pestis bv. Antiqua (strain Antiqua) protein is Octanoyltransferase.